A 309-amino-acid polypeptide reads, in one-letter code: Homoserine kinase (309 aa).

ATP is bound at residue 88–98 (PLARGLGSSAA).

This sequence belongs to the GHMP kinase family. Homoserine kinase subfamily.

The protein resides in the cytoplasm. The catalysed reaction is L-homoserine + ATP = O-phospho-L-homoserine + ADP + H(+). Its pathway is amino-acid biosynthesis; L-threonine biosynthesis; L-threonine from L-aspartate: step 4/5. In terms of biological role, catalyzes the ATP-dependent phosphorylation of L-homoserine to L-homoserine phosphate. In Halalkalibacterium halodurans (strain ATCC BAA-125 / DSM 18197 / FERM 7344 / JCM 9153 / C-125) (Bacillus halodurans), this protein is Homoserine kinase.